The sequence spans 227 residues: Dephospho-CoA kinase (227 aa).

In terms of domain architecture, DPCK spans 31–227; that stretch reads KIGLTGGIGS…EKLFQFINCL (197 aa). 39-44 is an ATP binding site; sequence GSGKST.

This sequence belongs to the CoaE family.

The protein resides in the cytoplasm. The catalysed reaction is 3'-dephospho-CoA + ATP = ADP + CoA + H(+). The protein operates within cofactor biosynthesis; coenzyme A biosynthesis; CoA from (R)-pantothenate: step 5/5. Its function is as follows. Catalyzes the phosphorylation of the 3'-hydroxyl group of dephosphocoenzyme A to form coenzyme A. This is Dephospho-CoA kinase from Clostridium tetani (strain Massachusetts / E88).